Reading from the N-terminus, the 431-residue chain is Probable sodium/metabolite cotransporter BASS3, chloroplastic (431 aa).

The transit peptide at 1–70 directs the protein to the chloroplast; it reads MTLIASLSLP…RRNSGLVPVV (70 aa). A run of 9 helical transmembrane segments spans residues 110 to 130, 145 to 165, 169 to 189, 198 to 218, 238 to 258, 261 to 281, 288 to 308, 325 to 345, and 387 to 407; these read FWSALLPFVVALTAVAALSYP, LGGIMLSIGIQLSVDDFALAF, VPLSVGFVAQYVLKPLLGVLV, TFYAGFILTCCVAGAQLSSYA, IASVIFTPLLSGLLIGSVVPV, VAMSKSILQVVLVPITLGLVL, VVTLLQPVMPFVAMVCTSLCI, LGLIVPIVTFHAVAFALGYWF, and VPAACSVVVMAIMGLCLASFW.

It belongs to the bile acid:sodium symporter (BASS) (TC 2.A.28) family.

The protein resides in the membrane. The protein localises to the plastid. It localises to the chloroplast envelope. Its function is as follows. May function as sodium-coupled metabolite transporter across the chloroplast envelope. The protein is Probable sodium/metabolite cotransporter BASS3, chloroplastic (BASS3) of Arabidopsis thaliana (Mouse-ear cress).